The primary structure comprises 155 residues: Endoribonuclease YbeY (155 aa).

Zn(2+) contacts are provided by His114, His118, and His124.

Belongs to the endoribonuclease YbeY family. Zn(2+) is required as a cofactor.

Its subcellular location is the cytoplasm. In terms of biological role, single strand-specific metallo-endoribonuclease involved in late-stage 70S ribosome quality control and in maturation of the 3' terminus of the 16S rRNA. This Cronobacter sakazakii (strain ATCC BAA-894) (Enterobacter sakazakii) protein is Endoribonuclease YbeY.